Here is a 478-residue protein sequence, read N- to C-terminus: Glycogen synthase (478 aa).

K15 provides a ligand contact to ADP-alpha-D-glucose.

It belongs to the glycosyltransferase 1 family. Bacterial/plant glycogen synthase subfamily.

The catalysed reaction is [(1-&gt;4)-alpha-D-glucosyl](n) + ADP-alpha-D-glucose = [(1-&gt;4)-alpha-D-glucosyl](n+1) + ADP + H(+). The protein operates within glycan biosynthesis; glycogen biosynthesis. In terms of biological role, synthesizes alpha-1,4-glucan chains using ADP-glucose. The protein is Glycogen synthase of Bacillus cytotoxicus (strain DSM 22905 / CIP 110041 / 391-98 / NVH 391-98).